The sequence spans 20 residues: Protein PR-L3 (20 aa).

Belongs to the BetVI family.

This is Protein PR-L3 from Lupinus luteus (European yellow lupine).